We begin with the raw amino-acid sequence, 835 residues long: Cap-specific mRNA (nucleoside-2'-O-)-methyltransferase 1 (835 aa).

Residues 1 to 67 (MKRRTDPECT…EGKQHSSDSF (67 aa)) are disordered. Positions 2–19 (KRRTDPECTAPIKKQKKR) match the Bipartite nuclear localization signal motif. A phosphoserine mark is found at serine 28, serine 31, serine 53, serine 66, and serine 91. Positions 37–54 (SSVSHGAKASTTSLSGSD) are enriched in polar residues. The segment covering 57–67 (TEGKQHSSDSF) has biased composition (basic and acidic residues). One can recognise a G-patch domain in the interval 87–133 (YNSVSQKLMAKMGFREGEGLGKYSQGRKDIVEASSQKGRRGLGLTLR). N6-acetyllysine is present on lysine 108. Substrate-binding positions include 203–207 (KSVFD) and arginine 218. Residues 231-450 (FFLNRAAMKM…ERYVVCKGLK (220 aa)) form the RrmJ-type SAM-dependent 2'-O-MTase domain. Position 234 (asparagine 234) interacts with S-adenosyl-L-methionine. Lysine 239 is an active-site residue. S-adenosyl-L-methionine-binding positions include 277–283 (CAGPGGF) and 335–336 (DI). Aspartate 364 is a catalytic residue. Residue 374–376 (NLQ) coordinates substrate. The active-site Proton acceptor is lysine 404. Asparagine 439 contributes to the substrate binding site. Residues 727 to 835 (SSGTPKLSYT…VLSFIQMHRA (109 aa)) are interaction with POLR2A. The WW domain occupies 752–786 (RTVNEPWTMGFSKSFKKKFFYNKKTKDSTFDLPAD).

In terms of assembly, interacts with POLR2A (via C-terminus).

It localises to the nucleus. It carries out the reaction a 5'-end (N(7)-methyl 5'-triphosphoguanosine)-ribonucleoside in mRNA + S-adenosyl-L-methionine = a 5'-end (N(7)-methyl 5'-triphosphoguanosine)-(2'-O-methyl-ribonucleoside) in mRNA + S-adenosyl-L-homocysteine + H(+). S-adenosyl-L-methionine-dependent methyltransferase that mediates mRNA cap1 2'-O-ribose methylation to the 5'-cap structure of mRNAs. Methylates the ribose of the first nucleotide of a m(7)GpppG-capped mRNA and small nuclear RNA (snRNA) to produce m(7)GpppRm (cap1). Displays a preference for cap0 transcripts. Cap1 modification is linked to higher levels of translation. May be involved in the interferon response pathway. This is Cap-specific mRNA (nucleoside-2'-O-)-methyltransferase 1 (CMTR1) from Homo sapiens (Human).